The chain runs to 447 residues: Tubulin beta-2 chain (447 aa).

Residues Gln9, Glu67, Ser136, Gly140, Thr141, Gly142, Asn202, and Asn224 each contribute to the GTP site. Glu67 contributes to the Mg(2+) binding site. A compositionally biased stretch (polar residues) spans 411–425 (SNMNDLVSEYQQYQD). The segment at 411-447 (SNMNDLVSEYQQYQDATAEEDEYEEEEEDYHQEHDEM) is disordered. Positions 427-440 (TAEEDEYEEEEEDY) are enriched in acidic residues.

Belongs to the tubulin family. Dimer of alpha and beta chains. A typical microtubule is a hollow water-filled tube with an outer diameter of 25 nm and an inner diameter of 15 nM. Alpha-beta heterodimers associate head-to-tail to form protofilaments running lengthwise along the microtubule wall with the beta-tubulin subunit facing the microtubule plus end conferring a structural polarity. Microtubules usually have 13 protofilaments but different protofilament numbers can be found in some organisms and specialized cells. Mg(2+) serves as cofactor.

Its subcellular location is the cytoplasm. The protein resides in the cytoskeleton. Tubulin is the major constituent of microtubules, a cylinder consisting of laterally associated linear protofilaments composed of alpha- and beta-tubulin heterodimers. Microtubules grow by the addition of GTP-tubulin dimers to the microtubule end, where a stabilizing cap forms. Below the cap, tubulin dimers are in GDP-bound state, owing to GTPase activity of alpha-tubulin. This is Tubulin beta-2 chain (TUBB2) from Pisum sativum (Garden pea).